A 230-amino-acid polypeptide reads, in one-letter code: Fibrillarin-like rRNA/tRNA 2'-O-methyltransferase (230 aa).

Residues 87–88, 105–106, 130–131, and 150–153 each bind S-adenosyl-L-methionine; these read TT, EF, DA, and DVAQ.

The protein belongs to the methyltransferase superfamily. Fibrillarin family. Interacts with nop5. Component of box C/D small ribonucleoprotein (sRNP) particles that contain rpl7ae, FlpA and nop5, plus a guide RNA.

Functionally, involved in pre-rRNA and tRNA processing. Utilizes the methyl donor S-adenosyl-L-methionine to catalyze the site-specific 2'-hydroxyl methylation of ribose moieties in rRNA and tRNA. Site specificity is provided by a guide RNA that base pairs with the substrate. Methylation occurs at a characteristic distance from the sequence involved in base pairing with the guide RNA. The polypeptide is Fibrillarin-like rRNA/tRNA 2'-O-methyltransferase (Methanococcus vannielii (strain ATCC 35089 / DSM 1224 / JCM 13029 / OCM 148 / SB)).